Consider the following 1272-residue polypeptide: AF4/FMR2 family member 2 (1272 aa).

Disordered stretches follow at residues 93–183 and 200–223; these read IPKN…LTQD and PQIG…SSGE. The span at 97-107 shows a compositional bias: polar residues; sequence SVPQNPNNKNE. Over residues 151–160 the composition is skewed to basic and acidic residues; sequence SKPEWSRDSH. Residues 161-183 show a composition bias toward polar residues; the sequence is NPSTVLASQASGQPNKMQTLTQD. A compositionally biased stretch (basic and acidic residues) spans 212–223; sequence AKEDSNPKSSGE. Residue Ser-391 is modified to Phosphoserine. 4 disordered regions span residues 418–491, 535–687, 779–829, and 842–903; these read KAKP…KWQL, TNAS…DQEE, SLHA…PEKK, and PPCI…QDKN. Residues 426-438 show a composition bias toward pro residues; the sequence is VNPPLATPQPPPA. Positions 439-452 are enriched in low complexity; the sequence is VQASGGSGSSSESE. Thr-478 is modified (phosphothreonine). Residues 543–558 are compositionally biased toward basic and acidic residues; the sequence is EPKERPLLSLIREKAR. Over residues 576–586 the composition is skewed to polar residues; that stretch reads STTSETVSQRT. Over residues 616-629 the composition is skewed to basic and acidic residues; the sequence is PKEKESVELHDPPR. Basic residues predominate over residues 630 to 640; the sequence is GRNKATAHKPA. Over residues 818-829 the composition is skewed to basic and acidic residues; sequence PTEVAEKIPEKK. 2 stretches are compositionally biased toward pro residues: residues 844 to 853 and 874 to 883; these read CISPAPPHKP and FPPPLSPLPE.

This sequence belongs to the AF4 family.

Its subcellular location is the nucleus speckle. Its function is as follows. RNA-binding protein. Might be involved in alternative splicing regulation through an interaction with G-quartet RNA structure. The sequence is that of AF4/FMR2 family member 2 (AFF2) from Pongo pygmaeus (Bornean orangutan).